The primary structure comprises 138 residues: Large ribosomal subunit protein uL16 (138 aa).

Positions 1–17 are enriched in basic residues; it reads MLIPRKVKHRKQHHPRQ. A disordered region spans residues 1–22; that stretch reads MLIPRKVKHRKQHHPRQRGIAS.

This sequence belongs to the universal ribosomal protein uL16 family. In terms of assembly, part of the 50S ribosomal subunit.

Functionally, binds 23S rRNA and is also seen to make contacts with the A and possibly P site tRNAs. This chain is Large ribosomal subunit protein uL16, found in Mycobacterium avium (strain 104).